The primary structure comprises 692 residues: Alpha-amylase SusG (692 aa).

The signal sequence occupies residues 1 to 22; the sequence is MNKHLHFLSLLWLSMLMAFMTA. Cys-23 carries the N-palmitoyl cysteine lipid modification. Cys-23 carries S-diacylglycerol cysteine lipidation. Residues Asp-73, Asp-75, Asp-77, Tyr-79, and Asp-81 each contribute to the Mg(2+) site. Asn-153 contacts Ca(2+). Starch binding stretches follow at residues His-154, 260–263, and 330–333; these read YYGE and NIMF. Asp-352 is a Ca(2+) binding site. A starch binding region spans residues 386-392; that stretch reads RLDAVKH. Asp-388 acts as the Nucleophile in catalysis. His-392 is a Ca(2+) binding site. The active-site Proton donor is the Glu-431. Residues Asp-437 and Arg-457 are each a region of interest (starch binding).

The protein belongs to the glycosyl hydrolase 13 family. Monomer. Ca(2+) is required as a cofactor.

It is found in the cell outer membrane. The enzyme catalyses Endohydrolysis of (1-&gt;4)-alpha-D-glucosidic linkages in polysaccharides containing three or more (1-&gt;4)-alpha-linked D-glucose units.. Its pathway is glycan degradation; starch degradation. Functionally, alpha-amylase that cleaves starch into oligosaccharides before internalization for degradation, the first step in starch degradation. The sequence is that of Alpha-amylase SusG (susG) from Bacteroides thetaiotaomicron (strain ATCC 29148 / DSM 2079 / JCM 5827 / CCUG 10774 / NCTC 10582 / VPI-5482 / E50).